A 301-amino-acid chain; its full sequence is Protoheme IX farnesyltransferase (301 aa).

9 helical membrane passes run 34 to 54 (LVVF…HPLI), 55 to 75 (GLVS…FNMW), 102 to 121 (AWEC…AIAV), 125 to 144 (SALL…TMLL), 152 to 172 (IVIG…SVSG), 181 to 201 (LFAI…LLTL), 222 to 242 (SHIL…GLFV), 247 to 267 (LYEI…IAVF), and 280 to 300 (GLFK…IACV).

Belongs to the UbiA prenyltransferase family. Protoheme IX farnesyltransferase subfamily.

Its subcellular location is the cell inner membrane. It catalyses the reaction heme b + (2E,6E)-farnesyl diphosphate + H2O = Fe(II)-heme o + diphosphate. It participates in porphyrin-containing compound metabolism; heme O biosynthesis; heme O from protoheme: step 1/1. Functionally, converts heme B (protoheme IX) to heme O by substitution of the vinyl group on carbon 2 of heme B porphyrin ring with a hydroxyethyl farnesyl side group. The polypeptide is Protoheme IX farnesyltransferase (Anaplasma marginale (strain Florida)).